The chain runs to 189 residues: Large ribosomal subunit protein bL9 (189 aa).

Belongs to the bacterial ribosomal protein bL9 family.

Functionally, binds to the 23S rRNA. The chain is Large ribosomal subunit protein bL9 from Methylocella silvestris (strain DSM 15510 / CIP 108128 / LMG 27833 / NCIMB 13906 / BL2).